The sequence spans 190 residues: Small ribosomal subunit protein uS5 (190 aa).

The S5 DRBM domain occupies 19–82; that stretch reads IIDKLVTINR…ERAKRSMIRV (64 aa). The segment at 161-190 is disordered; that stretch reads SVASRRGKKVSDILGRREPVAGQEGEEAHA. Positions 169 to 179 are enriched in basic and acidic residues; the sequence is KVSDILGRREP.

Belongs to the universal ribosomal protein uS5 family. Part of the 30S ribosomal subunit. Contacts proteins S4 and S8.

In terms of biological role, with S4 and S12 plays an important role in translational accuracy. Its function is as follows. Located at the back of the 30S subunit body where it stabilizes the conformation of the head with respect to the body. The chain is Small ribosomal subunit protein uS5 from Granulibacter bethesdensis (strain ATCC BAA-1260 / CGDNIH1).